The primary structure comprises 293 residues: Ribosomal protein L11 methyltransferase (293 aa).

S-adenosyl-L-methionine is bound by residues Thr145, Gly166, Asp188, and Asn229.

Belongs to the methyltransferase superfamily. PrmA family.

It localises to the cytoplasm. It carries out the reaction L-lysyl-[protein] + 3 S-adenosyl-L-methionine = N(6),N(6),N(6)-trimethyl-L-lysyl-[protein] + 3 S-adenosyl-L-homocysteine + 3 H(+). Methylates ribosomal protein L11. The sequence is that of Ribosomal protein L11 methyltransferase from Halorhodospira halophila (strain DSM 244 / SL1) (Ectothiorhodospira halophila (strain DSM 244 / SL1)).